Consider the following 31-residue polypeptide: Photosystem II reaction center protein T (31 aa).

Residues 3 to 23 (ALVYTFLLVGTLGIIFFAIFF) form a helical membrane-spanning segment.

The protein belongs to the PsbT family. As to quaternary structure, PSII is composed of 1 copy each of membrane proteins PsbA, PsbB, PsbC, PsbD, PsbE, PsbF, PsbH, PsbI, PsbJ, PsbK, PsbL, PsbM, PsbT, PsbY, PsbZ, Psb30/Ycf12, at least 3 peripheral proteins of the oxygen-evolving complex and a large number of cofactors. It forms dimeric complexes.

It is found in the plastid. Its subcellular location is the chloroplast thylakoid membrane. Functionally, found at the monomer-monomer interface of the photosystem II (PS II) dimer, plays a role in assembly and dimerization of PSII. PSII is a light-driven water plastoquinone oxidoreductase, using light energy to abstract electrons from H(2)O, generating a proton gradient subsequently used for ATP formation. This Mesostigma viride (Green alga) protein is Photosystem II reaction center protein T.